The following is a 282-amino-acid chain: Succinate dehydrogenase [ubiquinone] iron-sulfur subunit, mitochondrial (282 aa).

The N-terminal 26 residues, 1-26 (MAAVVFSLRRSGPVLRLSGALQVSRG), are a transit peptide targeting the mitochondrion. The 94-residue stretch at 42-135 (KKFAIYRWDP…VSKIYPLPHM (94 aa)) folds into the 2Fe-2S ferredoxin-type domain. [2Fe-2S] cluster is bound by residues Cys95, Cys100, Cys103, and Cys115. Residues 178–208 (DRDKLDGLYECILCACCSTSCPSYWWNADKY) form the 4Fe-4S ferredoxin-type domain. Cys188, Cys191, and Cys194 together coordinate [4Fe-4S] cluster. Cys198 provides a ligand contact to [3Fe-4S] cluster. Residue Trp203 coordinates a ubiquinone. Residues Cys245 and Cys251 each coordinate [3Fe-4S] cluster. Cys255 contributes to the [4Fe-4S] cluster binding site.

The protein belongs to the succinate dehydrogenase/fumarate reductase iron-sulfur protein family. Component of complex II composed of four subunits: the flavoprotein (FP) sdha, iron-sulfur protein (IP) sdhb, and a cytochrome b composed of sdhc and sdhd. Requires [2Fe-2S] cluster as cofactor. It depends on [3Fe-4S] cluster as a cofactor. [4Fe-4S] cluster is required as a cofactor.

It is found in the mitochondrion inner membrane. The enzyme catalyses a quinone + succinate = fumarate + a quinol. The catalysed reaction is (R)-malate + a quinone = enol-oxaloacetate + a quinol. It catalyses the reaction (S)-malate + a quinone = enol-oxaloacetate + a quinol. It participates in carbohydrate metabolism; tricarboxylic acid cycle; fumarate from succinate (eukaryal route): step 1/1. Enol-oxaloacetate inhibits the succinate dehydrogenase activity. In terms of biological role, iron-sulfur protein (IP) subunit of the succinate dehydrogenase complex (mitochondrial respiratory chain complex II), responsible for transferring electrons from succinate to ubiquinone (coenzyme Q). SDH also oxidizes malate to the non-canonical enol form of oxaloacetate, enol-oxaloacetate. Enol-oxaloacetate, which is a potent inhibitor of the succinate dehydrogenase activity, is further isomerized into keto-oxaloacetate. This chain is Succinate dehydrogenase [ubiquinone] iron-sulfur subunit, mitochondrial (sdhb), found in Xenopus laevis (African clawed frog).